Consider the following 211-residue polypeptide: ATP phosphoribosyltransferase (211 aa).

It belongs to the ATP phosphoribosyltransferase family. Short subfamily. Heteromultimer composed of HisG and HisZ subunits.

It is found in the cytoplasm. It catalyses the reaction 1-(5-phospho-beta-D-ribosyl)-ATP + diphosphate = 5-phospho-alpha-D-ribose 1-diphosphate + ATP. It functions in the pathway amino-acid biosynthesis; L-histidine biosynthesis; L-histidine from 5-phospho-alpha-D-ribose 1-diphosphate: step 1/9. In terms of biological role, catalyzes the condensation of ATP and 5-phosphoribose 1-diphosphate to form N'-(5'-phosphoribosyl)-ATP (PR-ATP). Has a crucial role in the pathway because the rate of histidine biosynthesis seems to be controlled primarily by regulation of HisG enzymatic activity. This is ATP phosphoribosyltransferase from Bacillus cereus (strain 03BB102).